We begin with the raw amino-acid sequence, 245 residues long: Ribonuclease PH (245 aa).

Residues R86 and 124 to 126 each bind phosphate; that span reads GTR.

This sequence belongs to the RNase PH family. In terms of assembly, homohexameric ring arranged as a trimer of dimers.

The enzyme catalyses tRNA(n+1) + phosphate = tRNA(n) + a ribonucleoside 5'-diphosphate. Functionally, phosphorolytic 3'-5' exoribonuclease that plays an important role in tRNA 3'-end maturation. Removes nucleotide residues following the 3'-CCA terminus of tRNAs; can also add nucleotides to the ends of RNA molecules by using nucleoside diphosphates as substrates, but this may not be physiologically important. Probably plays a role in initiation of 16S rRNA degradation (leading to ribosome degradation) during starvation. The sequence is that of Ribonuclease PH from Bacillus cereus (strain B4264).